The following is a 177-amino-acid chain: Adenine phosphoribosyltransferase (177 aa).

This sequence belongs to the purine/pyrimidine phosphoribosyltransferase family. Homodimer.

The protein localises to the cytoplasm. It carries out the reaction AMP + diphosphate = 5-phospho-alpha-D-ribose 1-diphosphate + adenine. The protein operates within purine metabolism; AMP biosynthesis via salvage pathway; AMP from adenine: step 1/1. Catalyzes a salvage reaction resulting in the formation of AMP, that is energically less costly than de novo synthesis. The chain is Adenine phosphoribosyltransferase from Synechococcus sp. (strain RCC307).